We begin with the raw amino-acid sequence, 582 residues long: Guanine nucleotide-binding protein-like NSN1 (582 aa).

Basic residues predominate over residues 1-46 (MVKRSKKSKSKRVTLKQKHKVLKKVKEHHKKKAKDAKKLGLHRKPR). The segment at 1–58 (MVKRSKKSKSKRVTLKQKHKVLKKVKEHHKKKAKDAKKLGLHRKPRVEKDPGIPNDWP) is disordered. The interval 2–49 (VKRSKKSKSKRVTLKQKHKVLKKVKEHHKKKAKDAKKLGLHRKPRVEK) is basic. 3 short sequence motifs (nuclear localization signal) span residues 5–12 (SKKSKSKR), 22–29 (LKKVKEHH), and 69–76 (VRRARALE). The stretch at 15 to 94 (LKQKHKVLKK…RKERAKKRKL (80 aa)) forms a coiled coil. Positions 127–311 (YKELVKVIEL…LLDCPGVVML (185 aa)) constitute a CP-type G domain. Positions 145-149 (DARDP) match the DARXP motif motif. The G4 stretch occupies residues 175–178 (NKID). 175–178 (NKID) is a binding site for GTP. A G5 region spans residues 202–204 (KCS). The interval 260-267 (GLPNVGKS) is G1. Residue 263 to 268 (NVGKSS) participates in GTP binding. An intermediate region spans residues 281 to 456 (VGATPGLTRS…NEFNPVIIPS (176 aa)). The tract at residues 286–290 (GLTRS) is G2. GTP is bound by residues 304–307 (DCPG) and glycine 307. Residues 304–307 (DCPG) form a G3 region. An acidic region spans residues 463-551 (DETMIEDESK…EEDLMDGDYD (89 aa)). Residues 469–545 (DESKTQTEEE…KKAGADEEDL (77 aa)) form a disordered region. Over residues 476-496 (EEEAEHESDDDESMGGEEEEE) the composition is skewed to acidic residues. The segment covering 497 to 506 (AGKTKEKSET) has biased composition (basic and acidic residues). The stretch at 515 to 537 (AAESMLNTKKQKAEKKKRKKAKK) forms a coiled coil. Positions 522-529 (TKKQKAEK) match the Nuclear localization signal 4 motif. A compositionally biased stretch (basic residues) spans 523 to 537 (KKQKAEKKKRKKAKK).

This sequence belongs to the TRAFAC class YlqF/YawG GTPase family. As to quaternary structure, interacts with EBP2 and PES. Mostly expressed in flowers, siliques and inflorescence apex, and, to a lower extent, in stems and leaves.

It localises to the nucleus. The protein resides in the nucleolus. Functionally, involved in the differentiation of epidermal cells, probably via the regulation of the expression of meristem-related genes (e.g. CLV3, STM, KNAT1, CUC2 and AG) and of leaf polarity-related genes (e.g. YAB5, FIL, AS2, PHB and PHV). May play a role in regulating cellular proliferation. Necessary for flower development, probably by preventing apical dominance through the down-regulation of AG expression. Required for embryogenesis, leaf and cotyledon development, as well as for leaf polarity establishment. Plays an important role in plant growth and senescence by modulating ribosome biogenesis in nucleolus. Possesses GTPAse activity in vitro. Possesses RNA binding activity in vitro. Associates with ribosomes. This is Guanine nucleotide-binding protein-like NSN1 from Arabidopsis thaliana (Mouse-ear cress).